A 106-amino-acid chain; its full sequence is Large ribosomal subunit protein uL30 (106 aa).

This sequence belongs to the universal ribosomal protein uL30 family. In terms of assembly, part of the 50S ribosomal subunit.

The polypeptide is Large ribosomal subunit protein uL30 (Ruthia magnifica subsp. Calyptogena magnifica).